The primary structure comprises 497 residues: Cytochrome P450 71A20 (497 aa).

The chain crosses the membrane as a helical span at residues Met3–Lys23. Residue Cys440 coordinates heme.

Belongs to the cytochrome P450 family. Requires heme as cofactor.

The protein localises to the membrane. The polypeptide is Cytochrome P450 71A20 (CYP71A20) (Arabidopsis thaliana (Mouse-ear cress)).